We begin with the raw amino-acid sequence, 456 residues long: Gustatory receptor for sugar taste 64a (456 aa).

Residues 1 to 30 (MKGPNLNFRKTPSKDNGVKQVESLARPETP) form a disordered region. Topologically, residues 1-91 (MKGPNLNFRK…RESNPRRVRF (91 aa)) are cytoplasmic. A helical transmembrane segment spans residues 92–114 (AYKSIPMFVTLIFMIATSILFLS). Residues 115-128 (MFTHLLKIGITAKN) are Extracellular-facing. The helical transmembrane segment at 129-150 (FVGLVFFGCVLSAYVVFIRLAK) threads the bilayer. G131 contributes to the sucrose binding site. Residues 151 to 182 (KWPAVVRIWTRTEIPFTKPPYEIPKRNLSRRV) lie on the Cytoplasmic side of the membrane. The chain crosses the membrane as a helical span at residues 183 to 205 (QLAALAIIGLSLGEHALYQVSAI). Residues E196, H197, and Y234 each coordinate sucrose. E196, H197, Y234, N253, and T257 together coordinate D-maltose. Topologically, residues 206–245 (LSYTRRIQMCANITTVPSFNNYMQTNYDYVFQLLPYSPII) are extracellular. The chain crosses the membrane as a helical span at residues 246 to 271 (AVLILLINGACTFVWNYMDLFIMMIS). Sucrose is bound at residue T257. The Cytoplasmic segment spans residues 272-318 (KGLSYRFEQITTRIRKLEHEEVCESVFIQIREHYVKMCELLEFVDSA). Residues 319–342 (MSSLILLSCVNNLYFVCYQLLNVF) traverse the membrane as a helical segment. At 343 to 350 (NKLRWPIN) the chain is on the extracellular side. A helical transmembrane segment spans residues 351–373 (YIYFWYSLLYLIGRTAFVFLTAA). Y353 contributes to the sucrose binding site. Y353 serves as a coordination point for D-maltose. Topologically, residues 374–421 (DINEESKRGLGVLRRVSSRSWCVEVERLIFQMTTQTVALSGKKFYFLT) are cytoplasmic. The helical transmembrane segment at 422–441 (RRLLFGMAGTIVTYELVLLQ) threads the bilayer. Over 442 to 456 (FDEPNRRKGLQPLCA) the chain is Extracellular.

It belongs to the insect chemoreceptor superfamily. Gustatory receptor (GR) family. Gr5a subfamily. As to quaternary structure, homotetramer. In terms of tissue distribution, expressed in Gr5a-expressing sugar-sensing cells.

The protein resides in the cell membrane. Its function is as follows. One of the few identified sugar gustatory receptors identified so far and which promotes the starvation-induced increase of feeding motivation. Required in combination with Gr64f to detect sucrose, maltose, and glucose. The polypeptide is Gustatory receptor for sugar taste 64a (Gr64a) (Drosophila melanogaster (Fruit fly)).